Here is a 168-residue protein sequence, read N- to C-terminus: ATP synthase subunit b (168 aa).

The helical transmembrane segment at 9–29 threads the bilayer; the sequence is LFNLSTFVFTIINLLVLYYIL.

It belongs to the ATPase B chain family. As to quaternary structure, F-type ATPases have 2 components, F(1) - the catalytic core - and F(0) - the membrane proton channel. F(1) has five subunits: alpha(3), beta(3), gamma(1), delta(1), epsilon(1). F(0) has three main subunits: a(1), b(2) and c(10-14). The alpha and beta chains form an alternating ring which encloses part of the gamma chain. F(1) is attached to F(0) by a central stalk formed by the gamma and epsilon chains, while a peripheral stalk is formed by the delta and b chains.

The protein localises to the cell membrane. F(1)F(0) ATP synthase produces ATP from ADP in the presence of a proton or sodium gradient. F-type ATPases consist of two structural domains, F(1) containing the extramembraneous catalytic core and F(0) containing the membrane proton channel, linked together by a central stalk and a peripheral stalk. During catalysis, ATP synthesis in the catalytic domain of F(1) is coupled via a rotary mechanism of the central stalk subunits to proton translocation. Its function is as follows. Component of the F(0) channel, it forms part of the peripheral stalk, linking F(1) to F(0). In Caldanaerobacter subterraneus subsp. tengcongensis (strain DSM 15242 / JCM 11007 / NBRC 100824 / MB4) (Thermoanaerobacter tengcongensis), this protein is ATP synthase subunit b.